Consider the following 285-residue polypeptide: HTH-type transcriptional regulator MurR (285 aa).

The region spanning 1 to 77 is the HTH rpiR-type domain; it reads MLYLTKISNA…MALIGEYSAS (77 aa). The H-T-H motif DNA-binding region spans 37-56; that stretch reads SRQMAKQLGISQSSIVKFAQ. Positions 128–268 constitute an SIS domain; sequence IIEVISKAPF…FVGLVQLNDV (141 aa).

Homotetramer.

It participates in amino-sugar metabolism; N-acetylmuramate degradation [regulation]. Functionally, represses the expression of the murPQ operon involved in the uptake and degradation of N-acetylmuramic acid (MurNAc). Binds to two adjacent inverted repeats within the operator region. MurNAc 6-phosphate, the substrate of MurQ, is the specific inducer that weakens binding of MurR to the operator. This chain is HTH-type transcriptional regulator MurR, found in Escherichia coli (strain K12 / MC4100 / BW2952).